The chain runs to 461 residues: Asparagine--tRNA ligase (461 aa).

The protein belongs to the class-II aminoacyl-tRNA synthetase family. In terms of assembly, homodimer.

Its subcellular location is the cytoplasm. It carries out the reaction tRNA(Asn) + L-asparagine + ATP = L-asparaginyl-tRNA(Asn) + AMP + diphosphate + H(+). This Nitratidesulfovibrio vulgaris (strain ATCC 29579 / DSM 644 / CCUG 34227 / NCIMB 8303 / VKM B-1760 / Hildenborough) (Desulfovibrio vulgaris) protein is Asparagine--tRNA ligase.